Here is a 486-residue protein sequence, read N- to C-terminus: Probable peptidoglycan glycosyltransferase FtsW (486 aa).

The Cytoplasmic portion of the chain corresponds to 1-50 (MAGAARDRAFLDHFGGAGADRPCHVEGALMNDMSRQATRLDAIGGRYDPW). A helical transmembrane segment spans residues 51 to 71 (LLGAAVTLASLGVVMVASSSI). The Periplasmic portion of the chain corresponds to 72–77 (ELEASP). The helical transmembrane segment at 78–98 (FYYLTRHLLFLGGGIALAFWA) threads the bilayer. Residues 99–112 (MRTELKTIEQHNQM) lie on the Cytoplasmic side of the membrane. A helical membrane pass occupies residues 113-133 (LLLACFVLLVVVFVPGLGSTV). The Periplasmic portion of the chain corresponds to 134–141 (NGAKRWIN). The chain crosses the membrane as a helical span at residues 142 to 162 (LGVSRFQVVESVKVFYIIWLA). Over 163 to 174 (SYLVRFRDEVNA) the chain is Cytoplasmic. Residues 175-195 (TWQAMLKPVFVVGLLVGLLLL) form a helical membrane-spanning segment. Residues 196 to 199 (QPDF) lie on the Periplasmic side of the membrane. The chain crosses the membrane as a helical span at residues 200–220 (GSSMLLLSVTACMLVLGGAPI). Residues 221-222 (GR) are Cytoplasmic-facing. A helical membrane pass occupies residues 223 to 243 (IILPILLLLPALVALVIFEPY). Residues 244-298 (RMRRVTSFMDPWVDQLGSGYQLSNALMAIGRGQWTGVGLGASVQKLNYLPESHTD) lie on the Periplasmic side of the membrane. A helical membrane pass occupies residues 299-319 (FIFSVIAEELGFVGVCGVIGL). The Cytoplasmic segment spans residues 320 to 342 (YALLVGRAFWLGMRCVEMKRHFS). A helical membrane pass occupies residues 343–363 (GYIAFGIGLWIAMQSFVSIGV). Residues 364 to 374 (NLGILPTKGLT) lie on the Periplasmic side of the membrane. Residues 375 to 395 (LPLISSGGSSVLMTCLAMGVL) traverse the membrane as a helical segment. Residues 396–486 (LRVSYEADRA…RVEPTFGRIA (91 aa)) lie on the Cytoplasmic side of the membrane.

Belongs to the SEDS family. FtsW subfamily.

The protein resides in the cell inner membrane. The catalysed reaction is [GlcNAc-(1-&gt;4)-Mur2Ac(oyl-L-Ala-gamma-D-Glu-L-Lys-D-Ala-D-Ala)](n)-di-trans,octa-cis-undecaprenyl diphosphate + beta-D-GlcNAc-(1-&gt;4)-Mur2Ac(oyl-L-Ala-gamma-D-Glu-L-Lys-D-Ala-D-Ala)-di-trans,octa-cis-undecaprenyl diphosphate = [GlcNAc-(1-&gt;4)-Mur2Ac(oyl-L-Ala-gamma-D-Glu-L-Lys-D-Ala-D-Ala)](n+1)-di-trans,octa-cis-undecaprenyl diphosphate + di-trans,octa-cis-undecaprenyl diphosphate + H(+). The protein operates within cell wall biogenesis; peptidoglycan biosynthesis. Its function is as follows. Peptidoglycan polymerase that is essential for cell division. This is Probable peptidoglycan glycosyltransferase FtsW from Xanthomonas oryzae pv. oryzae (strain KACC10331 / KXO85).